The chain runs to 136 residues: Protein NrdI (136 aa).

This sequence belongs to the NrdI family.

Functionally, probably involved in ribonucleotide reductase function. This is Protein NrdI from Salmonella dublin (strain CT_02021853).